The sequence spans 461 residues: ATP-dependent protease ATPase subunit HslU (461 aa).

ATP-binding positions include Ile-18, 60–65 (GVGKTE), Asp-274, Glu-339, and Arg-411.

This sequence belongs to the ClpX chaperone family. HslU subfamily. In terms of assembly, a double ring-shaped homohexamer of HslV is capped on each side by a ring-shaped HslU homohexamer. The assembly of the HslU/HslV complex is dependent on binding of ATP.

It localises to the cytoplasm. ATPase subunit of a proteasome-like degradation complex; this subunit has chaperone activity. The binding of ATP and its subsequent hydrolysis by HslU are essential for unfolding of protein substrates subsequently hydrolyzed by HslV. HslU recognizes the N-terminal part of its protein substrates and unfolds these before they are guided to HslV for hydrolysis. The polypeptide is ATP-dependent protease ATPase subunit HslU (Carboxydothermus hydrogenoformans (strain ATCC BAA-161 / DSM 6008 / Z-2901)).